The sequence spans 273 residues: ATP synthase subunit delta (273 aa).

The protein belongs to the ATPase delta chain family. As to quaternary structure, F-type ATPases have 2 components, F(1) - the catalytic core - and F(0) - the membrane proton channel. F(1) has five subunits: alpha(3), beta(3), gamma(1), delta(1), epsilon(1). F(0) has three main subunits: a(1), b(2) and c(10-14). The alpha and beta chains form an alternating ring which encloses part of the gamma chain. F(1) is attached to F(0) by a central stalk formed by the gamma and epsilon chains, while a peripheral stalk is formed by the delta and b chains.

Its subcellular location is the cell membrane. In terms of biological role, f(1)F(0) ATP synthase produces ATP from ADP in the presence of a proton or sodium gradient. F-type ATPases consist of two structural domains, F(1) containing the extramembraneous catalytic core and F(0) containing the membrane proton channel, linked together by a central stalk and a peripheral stalk. During catalysis, ATP synthesis in the catalytic domain of F(1) is coupled via a rotary mechanism of the central stalk subunits to proton translocation. This protein is part of the stalk that links CF(0) to CF(1). It either transmits conformational changes from CF(0) to CF(1) or is implicated in proton conduction. This is ATP synthase subunit delta from Corynebacterium diphtheriae (strain ATCC 700971 / NCTC 13129 / Biotype gravis).